We begin with the raw amino-acid sequence, 621 residues long: MTVPLIQNPEVLESRLKEIPAEPGVYLMRDATDQILYVGKSKKLRSRVRSYFRFTGDLSPRIQRMVVQVCEIEFIVTDNESEALALEDNLIKTYQPPYNVLLKEDKKYPYLCITWSEPYPQIYITRHRRLNQNQDKYYGPYTDVGLLRYTLGLVKRIFPLRQRPKPLYKDRPCLNYDIGRCPGVCQGLISPEAYRKTVAQVAMIFQGQTDELIRELKEKMAQAAQQENYEAAARYRDQIRGLEQLGQSQKVSLPNSTASRDAIALAMNDSRACIQLFQVRAGKLVGRLGFVAENRGDDPALILQRVLQEHYQYCDPVEIPSEILTQYELPDRDFLESWLSQKKGRKVSLLAPQRQSKAELIELVERNAQLELARSQRLAEREAAALERLAEVLDLPEPPRRLEAYDISHIQGSDAVGSQVVFIDGLPAKQHYRRYKIRNPQVRPGHSDDFASHAEVARRRFSKMTSEDQPDLVLIDGGKGQLAAVMAVLAELGLDHLPVFALAKREEEIFRPGDPEPLRLPPQDPARLLLQRLRDEAHRFALAYHRQQRKLRQQASVLEEIPGLGKQRQKLLMEAFRSLARIQVATEEQLAQVPGIGPKLARQIYRYFHPEAETELPATAE.

Residues 21-100 (AEPGVYLMRD…IKTYQPPYNV (80 aa)) enclose the GIY-YIG domain. A UVR domain is found at 210 to 245 (DELIRELKEKMAQAAQQENYEAAARYRDQIRGLEQL).

This sequence belongs to the UvrC family. Interacts with UvrB in an incision complex.

The protein resides in the cytoplasm. Its function is as follows. The UvrABC repair system catalyzes the recognition and processing of DNA lesions. UvrC both incises the 5' and 3' sides of the lesion. The N-terminal half is responsible for the 3' incision and the C-terminal half is responsible for the 5' incision. The protein is UvrABC system protein C of Synechococcus sp. (strain JA-3-3Ab) (Cyanobacteria bacterium Yellowstone A-Prime).